A 333-amino-acid chain; its full sequence is Probable tRNA pseudouridine synthase B (333 aa).

The active-site Nucleophile is the Asp-71. Residues 238 to 313 (LPKIWVRDSA…LVARTDRVVM (76 aa)) enclose the PUA domain.

Belongs to the pseudouridine synthase TruB family. Type 2 subfamily.

The catalysed reaction is uridine(55) in tRNA = pseudouridine(55) in tRNA. Functionally, could be responsible for synthesis of pseudouridine from uracil-55 in the psi GC loop of transfer RNAs. In Pyrobaculum calidifontis (strain DSM 21063 / JCM 11548 / VA1), this protein is Probable tRNA pseudouridine synthase B.